The chain runs to 190 residues: Segregation and condensation protein B (190 aa).

This sequence belongs to the ScpB family. In terms of assembly, homodimer. Homodimerization may be required to stabilize the binding of ScpA to the Smc head domains. Component of a cohesin-like complex composed of ScpA, ScpB and the Smc homodimer, in which ScpA and ScpB bind to the head domain of Smc. The presence of the three proteins is required for the association of the complex with DNA.

The protein localises to the cytoplasm. Its function is as follows. Participates in chromosomal partition during cell division. May act via the formation of a condensin-like complex containing Smc and ScpA that pull DNA away from mid-cell into both cell halves. The chain is Segregation and condensation protein B from Alkaliphilus metalliredigens (strain QYMF).